The sequence spans 285 residues: Nucleotide-binding protein Pmen_0867 (285 aa).

8–15 (GRSGSGKS) contacts ATP. 60–63 (DARN) is a GTP binding site.

This sequence belongs to the RapZ-like family.

Displays ATPase and GTPase activities. The polypeptide is Nucleotide-binding protein Pmen_0867 (Ectopseudomonas mendocina (strain ymp) (Pseudomonas mendocina)).